A 159-amino-acid chain; its full sequence is Large ribosomal subunit protein uL23m (159 aa).

Belongs to the universal ribosomal protein uL23 family. In terms of assembly, component of the mitochondrial ribosome large subunit (39S) which comprises a 16S rRNA and about 50 distinct proteins.

Its subcellular location is the mitochondrion. The chain is Large ribosomal subunit protein uL23m (mrpl-23) from Caenorhabditis briggsae.